The following is a 76-amino-acid chain: Small ribosomal subunit protein bS18 (76 aa).

The protein belongs to the bacterial ribosomal protein bS18 family. As to quaternary structure, part of the 30S ribosomal subunit. Forms a tight heterodimer with protein bS6.

Its function is as follows. Binds as a heterodimer with protein bS6 to the central domain of the 16S rRNA, where it helps stabilize the platform of the 30S subunit. In Pelotomaculum thermopropionicum (strain DSM 13744 / JCM 10971 / SI), this protein is Small ribosomal subunit protein bS18.